Reading from the N-terminus, the 1155-residue chain is MIKRVHLGQGRADEILDLPNLIEIQLNSYEKFLQLDKLKNKKPLLNEGLESVFRNIFPIKSGNGDVALEYERYYIENDTLNFTEKECKRKGQSYEAVLKVRLNLQFLTTGEIRQKDVYMGTIPLMTERGTFIINGAERVIVSQIHRSPGVVFYKEKDLYSARIIPYRGSWLEFEIDSKKDYLYVKIDRKKRILITLFLRALGFDTREKIIETFYNIKKIKVEEGTKRDLPGQYLAKSINIRENMYYRAGDKITLQDVEDFLQNGVNEIELVDFDGYNDVSGKYFVSSNVILNCLEKEDAFFALKDGSKELPKESVMLAVYGALFPGEPISIDNAENDLKTIFFSERRYDLGRVGRYKLSKKFGSDDLSTSVLTMDDIVNTISHLLRIYEGHDILDDIDHLGNRRVRSVGELLTNIYKGAMSRVEKIAKDRMSNKEVFNLKPQELISVKPIVSAVKEFFATSQLSQFMDQVNPLAELTHKRRLNALGPGGLSRDRAGFEVRDVHYTHYGRMCPIETPEGPNIGLIVSLATYSRVNDYGFLETPYRKVVNGEVTNELEYLSAIDEEKKCIAQANAAFNSDGKYLEDLVSVRISGDYTTTNPKNIDYMDVSPRQLISVSSALIPFLEHNDANRALMGSNMQRQAVPLLFPKPPIVGTGMESVVAKDSGVVVKAKRSGEVILATSNKIVVKPFESENVKDLDEYHIVKYERTNQDTCFNQSVLVKEGQKVERGEIIADGPATRYGELALGNNLLLGVIPWNGFNYEDAILISDRIVKEDLYTSIHIKEFSIEVRETKLGPEKVTGDIPNVSEKILNKLDENGIIRIGTYVKPGDILVGKVTPKSEGDITPEFRLLTSIFGEKAKDVKNNSLKVPHGTEGTVIDVQRITKEDVGNLSPGVEEILKVYVAKKRKLKEGDKMAGRHGNKGVVAKILPVEDMPYLADGTPLDICLNPLGVPSRMNIGQLMESQLGLAGKYLSESYNVPVFESATNEQIQEKLKKAGFNPTSKEILYDGYTGEPFENEVMVGVIYMLKLHHLVDDKMHARSTGPYSLVSQQPLGGKAQFGGQRLGEMEVWALEAYGAAHTLQELLTVKSDDMSGRVKIYENIVKGVPTNVSGIPESFNVLMQELRGLGLDLSIYDDNGNQVPLTEKEEELINKS.

Belongs to the RNA polymerase beta chain family. The RNAP catalytic core consists of 2 alpha, 1 beta, 1 beta' and 1 omega subunit. When a sigma factor is associated with the core the holoenzyme is formed, which can initiate transcription.

It carries out the reaction RNA(n) + a ribonucleoside 5'-triphosphate = RNA(n+1) + diphosphate. Functionally, DNA-dependent RNA polymerase catalyzes the transcription of DNA into RNA using the four ribonucleoside triphosphates as substrates. This chain is DNA-directed RNA polymerase subunit beta, found in Borreliella afzelii (strain PKo) (Borrelia afzelii).